Reading from the N-terminus, the 494-residue chain is MGFHQIDERNQALLSKIAIDDGHGENSAYFDGWKAYDNNPFHPENNPLGVIQMGLAENQLSFGMIVDWIRKHPEASICTPEGLEKFKSIANFQDYHGLQEFRKAMASFMGKVRGGRVKFDPSRIVMGGGATGASETVIFCLADPGDAFLVPSPYYAAFDRDLKWRTRAQIIPVHCNSSNNFQVTEAALEIAYKKAQEANMKVKGVIITNPSNPLGTTYDRDTLKTLVTFVNQHDIHLICDEIYSATVFKAPTFTSIAEIVEQMEHCKKELIHILYSLSKDMGLPGFRVGIIYSYNDVVVRRARQMSSFGLVSSQTQHLLAAMLSDEDFVDKFLAENSKRLGERHARFTKELDKMGITCLNSNAGVFVWMDLRRLLKDQTFKAEMELWRVIINEVKLNVSPGSSFHVTEPGWFRVCFANMDDNTVDVALNRIHSFVENIDKKEDNTVAMPSKTRHRDNKLRLSFSFSGRRYDKGNVLNSPHTMSPHSPLVRARTY.

K279 bears the N6-(pyridoxal phosphate)lysine mark. The segment at N474–Y494 is disordered. Over residues V475 to P484 the composition is skewed to polar residues.

It belongs to the class-I pyridoxal-phosphate-dependent aminotransferase family. Homodimer. The cofactor is pyridoxal 5'-phosphate.

It catalyses the reaction S-adenosyl-L-methionine = 1-aminocyclopropane-1-carboxylate + S-methyl-5'-thioadenosine + H(+). It functions in the pathway alkene biosynthesis; ethylene biosynthesis via S-adenosyl-L-methionine; ethylene from S-adenosyl-L-methionine: step 1/2. Its function is as follows. Catalyzes the formation of 1-aminocyclopropane-1-carboxylate, a direct precursor of ethylene in higher plants. This Cucurbita pepo (Vegetable marrow) protein is 1-aminocyclopropane-1-carboxylate synthase 2 (ACS2).